A 201-amino-acid polypeptide reads, in one-letter code: Large ribosomal subunit protein uL4 (201 aa).

Residues 44 to 68 (KAQKTRSEVAGTTKKSKKQKGGGAR) are disordered.

The protein belongs to the universal ribosomal protein uL4 family. Part of the 50S ribosomal subunit.

Its function is as follows. One of the primary rRNA binding proteins, this protein initially binds near the 5'-end of the 23S rRNA. It is important during the early stages of 50S assembly. It makes multiple contacts with different domains of the 23S rRNA in the assembled 50S subunit and ribosome. Forms part of the polypeptide exit tunnel. The sequence is that of Large ribosomal subunit protein uL4 from Xanthomonas oryzae pv. oryzae (strain MAFF 311018).